The primary structure comprises 265 residues: Apolipoprotein A-I (265 aa).

An N-terminal signal peptide occupies residues 1-20 (METKAVVLTLAVLFLTGSQA). 2 tandem repeats follow at residues 69 to 90 (LKIL…EQMR) and 91 to 112 (PIFQ…EVLN). Residues 69–265 (LKILDNWDTL…DEATKKLNSQ (197 aa)) are 10 X approximate tandem repeats. A 3; half-length repeat occupies 113 to 123 (KDLEELKQKVQ). 5 consecutive repeat copies span residues 124 to 145 (PYLD…QKMA), 146 to 167 (PLGT…EKLG), 168 to 189 (PLGE…TQLA), 190 to 209 (PYTE…LKES), and 210 to 230 (NLAE…ENAK). A Methionine sulfoxide modification is found at M195. The stretch at 231–241 (PALEDFRQGLM) is one 9; half-length repeat. Residue M241 is modified to Methionine sulfoxide. Repeat 10 spans residues 242–265 (PVLEGFQKSVLAALDEATKKLNSQ).

The protein belongs to the apolipoprotein A1/A4/E family. As to quaternary structure, homodimer. Interacts with APOA1BP and CLU. Component of a sperm activating protein complex (SPAP), consisting of APOA1, an immunoglobulin heavy chain, an immunoglobulin light chain and albumin. Interacts with NDRG1. Interacts with SCGB3A2. Interacts with NAXE and YJEFN3. Post-translationally, glycosylated. In terms of processing, palmitoylated. Phosphorylation sites are present in the extracellular medium. In terms of tissue distribution, major protein of plasma HDL, also found in chylomicrons.

The protein resides in the secreted. Its function is as follows. Participates in the reverse transport of cholesterol from tissues to the liver for excretion by promoting cholesterol efflux from tissues and by acting as a cofactor for the lecithin cholesterol acyltransferase (LCAT). As part of the SPAP complex, activates spermatozoa motility. In Orycteropus afer (Aardvark), this protein is Apolipoprotein A-I (APOA1).